We begin with the raw amino-acid sequence, 754 residues long: 1,4-alpha-glucan branching enzyme GlgB (754 aa).

Asp431 (nucleophile) is an active-site residue. Glu484 (proton donor) is an active-site residue.

It belongs to the glycosyl hydrolase 13 family. GlgB subfamily. As to quaternary structure, monomer.

It carries out the reaction Transfers a segment of a (1-&gt;4)-alpha-D-glucan chain to a primary hydroxy group in a similar glucan chain.. Its pathway is glycan biosynthesis; glycogen biosynthesis. Its function is as follows. Catalyzes the formation of the alpha-1,6-glucosidic linkages in glycogen by scission of a 1,4-alpha-linked oligosaccharide from growing alpha-1,4-glucan chains and the subsequent attachment of the oligosaccharide to the alpha-1,6 position. This is 1,4-alpha-glucan branching enzyme GlgB from Prochlorococcus marinus subsp. pastoris (strain CCMP1986 / NIES-2087 / MED4).